Consider the following 638-residue polypeptide: Trichohyalin-like protein 1 (638 aa).

The region spanning 49–84 (HVFHAVERKLNLLNFDRDGTISFEEFVLAIFSLLNP) is the EF-hand domain. Residues 134-638 (SEMASSGQPS…ALEAESLEAQ (505 aa)) are disordered. The segment covering 166-179 (LPRNVSEPNDPENQ) has biased composition (polar residues). Composition is skewed to basic and acidic residues over residues 221-246 (IPRE…QRPT), 294-309 (DDTK…KDAG), and 318-328 (EEPKADAKVAE). Over residues 343 to 357 (DQSVQSRSRNVSETS) the composition is skewed to polar residues. Composition is skewed to basic and acidic residues over residues 358–372 (SRGE…HERI), 395–409 (REND…KDPS), 419–435 (EIKE…HSEE), 479–490 (RIQDKPVRKEDH), 526–548 (AEPH…KQES), and 622–631 (AGRENRKALE).

Belongs to the S-100 family.

This chain is Trichohyalin-like protein 1 (Tchhl1), found in Mus musculus (Mouse).